The chain runs to 420 residues: D-tagatose-1,6-bisphosphate aldolase subunit GatZ (420 aa).

The protein belongs to the GatZ/KbaZ family. GatZ subfamily. As to quaternary structure, forms a complex with GatY.

The protein operates within carbohydrate metabolism; D-tagatose 6-phosphate degradation; D-glyceraldehyde 3-phosphate and glycerone phosphate from D-tagatose 6-phosphate: step 2/2. Its function is as follows. Component of the tagatose-1,6-bisphosphate aldolase GatYZ that is required for full activity and stability of the Y subunit. Could have a chaperone-like function for the proper and stable folding of GatY. When expressed alone, GatZ does not show any aldolase activity. Is involved in the catabolism of galactitol. In Escherichia coli O17:K52:H18 (strain UMN026 / ExPEC), this protein is D-tagatose-1,6-bisphosphate aldolase subunit GatZ.